The sequence spans 132 residues: Guanyl-specific ribonuclease C2 (132 aa).

The signal sequence occupies residues 1–26 (MLYNKLITIAALLVPALAAPQGLDVR). Cystine bridges form between cysteine 28–cysteine 36 and cysteine 32–cysteine 129. Histidine 66 is an active-site residue. Glutamate 84 acts as the Proton acceptor in catalysis. Histidine 118 (proton donor) is an active-site residue.

Belongs to the ribonuclease N1/T1 family.

It localises to the secreted. The enzyme catalyses [RNA] containing guanosine + H2O = an [RNA fragment]-3'-guanosine-3'-phosphate + a 5'-hydroxy-ribonucleotide-3'-[RNA fragment].. In Aspergillus clavatus (strain ATCC 1007 / CBS 513.65 / DSM 816 / NCTC 3887 / NRRL 1 / QM 1276 / 107), this protein is Guanyl-specific ribonuclease C2.